The primary structure comprises 137 residues: DNA polymerase III subunit psi (137 aa).

The protein belongs to the DNA polymerase III psi/HolD chain family. In terms of assembly, the DNA polymerase III holoenzyme complex contains at least 10 different subunits organized into 3 functionally essential subassemblies: the Pol III core, the beta sliding clamp processivity factor and the clamp-loading complex. The Pol III core (subunits alpha, epsilon and theta) contains the polymerase and the 3'-5' exonuclease proofreading activities. The polymerase is tethered to the template via the dimeric beta sliding clamp processivity factor. The clamp-loading complex (also called gamma complex) assembles the beta sliding clamp onto the primed template and plays a central role in the organization and communication at the replication fork. The clamp-loading complex contains delta, delta', psi and chi, and 3 copies of either or both of two different DnaX proteins, gamma and tau. The DNA replisome complex has a single clamp loader (3 tau and 1 each of delta, delta', psi and chi subunits) which binds 3 Pol III cores (1 core on the leading strand and 2 on the lagging strand) each with a beta sliding clamp dimer. Additional proteins in the replisome are other copies of gamma, psi (this protein) and chi (holC), SSB, DNA helicase and RNA primase. The clamp loader hydrolyzes ATP to assemble the beta processivity factor onto the primed template and plays a central role in the organization and communication at the replication fork. Interacts directly with the chi subunit (holC).

It carries out the reaction DNA(n) + a 2'-deoxyribonucleoside 5'-triphosphate = DNA(n+1) + diphosphate. Functionally, part of the beta sliding clamp loading complex, which hydrolyzes ATP to load the beta clamp onto primed DNA to form the DNA replication pre-initiation complex. DNA polymerase III is a complex, multichain enzyme responsible for most of the replicative synthesis in bacteria. This DNA polymerase also exhibits 3' to 5' exonuclease activity. The polypeptide is DNA polymerase III subunit psi (Escherichia coli (strain K12)).